We begin with the raw amino-acid sequence, 92 residues long: Integration host factor subunit beta (92 aa).

Belongs to the bacterial histone-like protein family. Heterodimer of an alpha and a beta chain.

This protein is one of the two subunits of integration host factor, a specific DNA-binding protein that functions in genetic recombination as well as in transcriptional and translational control. The polypeptide is Integration host factor subunit beta (Azotobacter vinelandii (strain DJ / ATCC BAA-1303)).